A 555-amino-acid polypeptide reads, in one-letter code: Connector enhancer of kinase suppressor of ras 3 (555 aa).

Residues tryptophan 7–leucine 72 form the SAM domain. Residues asparagine 80–alanine 174 form the CRIC domain. Residues glutamate 211–proline 293 form the PDZ domain. Disordered regions lie at residues arginine 308–serine 333, proline 348–glutamate 391, and proline 518–glycine 538. The span at proline 311–threonine 329 shows a compositional bias: low complexity. The DUF1170 domain occupies serine 325–tryptophan 546. 2 positions are modified to phosphoserine: serine 381 and serine 383.

This sequence belongs to the CNKSR family. Interacts with epithelial sodium channel ENaC. Interacts directly with SCNN1A (ENaC subunit alpha) and SCNN1B (ENaC subunit beta) C-terminal tails. Interacts with ENaC regulatory proteins NEDD4L, RAF1 and SGK1.

It localises to the cytoplasm. The protein resides in the apical cell membrane. In terms of biological role, involved in transepithelial sodium transport. Regulates aldosterone-induced and epithelial sodium channel (ENaC)-mediated sodium transport through regulation of ENaC cell surface expression. Acts as a scaffold protein coordinating the assembly of an ENaC-regulatory complex (ERC). The chain is Connector enhancer of kinase suppressor of ras 3 (Cnksr3) from Rattus norvegicus (Rat).